A 268-amino-acid polypeptide reads, in one-letter code: tRNA pseudouridine synthase A (268 aa).

Aspartate 52 serves as the catalytic Nucleophile. Tyrosine 113 contacts substrate.

This sequence belongs to the tRNA pseudouridine synthase TruA family. As to quaternary structure, homodimer.

The enzyme catalyses uridine(38/39/40) in tRNA = pseudouridine(38/39/40) in tRNA. In terms of biological role, formation of pseudouridine at positions 38, 39 and 40 in the anticodon stem and loop of transfer RNAs. This is tRNA pseudouridine synthase A from Rhizobium leguminosarum bv. trifolii (strain WSM2304).